The following is a 103-amino-acid chain: N(4)-acetylcytidine amidohydrolase (103 aa).

In terms of domain architecture, ASCH spans 6 to 92; sequence TFFERFEPGI…VIQEIYPGLE (87 aa). Residue Lys-20 is the Proton acceptor of the active site. The active-site Nucleophile is the Thr-23. The active-site Proton donor is the Glu-73.

This sequence belongs to the N(4)-acetylcytidine amidohydrolase family.

The enzyme catalyses N(4)-acetylcytidine + H2O = cytidine + acetate + H(+). The catalysed reaction is N(4)-acetyl-2'-deoxycytidine + H2O = 2'-deoxycytidine + acetate + H(+). It catalyses the reaction N(4)-acetylcytosine + H2O = cytosine + acetate + H(+). In terms of biological role, catalyzes the hydrolysis of N(4)-acetylcytidine (ac4C). The sequence is that of N(4)-acetylcytidine amidohydrolase from Shewanella sp. (strain MR-7).